The chain runs to 937 residues: Periplasmic nitrate reductase (937 aa).

The segment at residues 1-31 (MSMNRREFLKTTAAAAAASAVGISIPSEAKA) is a signal peptide (tat-type signal). Positions 40–96 (WQWDKAVCRFCGTGCGIMVAVKDDKIVAVKGDPESPVNRGINCIKGYFNAKIMYGAD) constitute a 4Fe-4S Mo/W bis-MGD-type domain. Positions 47, 50, 54, and 82 each coordinate [4Fe-4S] cluster. Mo-bis(molybdopterin guanine dinucleotide)-binding positions include K84, Q152, N177, C181, 214-221 (WGANMAEM), M422, Q426, N532, K580, D607, and 827-836 (TGRVLEHWHS). W903 contacts substrate. Mo-bis(molybdopterin guanine dinucleotide)-binding residues include N911 and K928.

Belongs to the prokaryotic molybdopterin-containing oxidoreductase family. NasA/NapA/NarB subfamily. As to quaternary structure, component of the periplasmic nitrate reductase NapAB complex composed of NapA and NapB. The cofactor is [4Fe-4S] cluster. It depends on Mo-bis(molybdopterin guanine dinucleotide) as a cofactor. Post-translationally, predicted to be exported by the Tat system. The position of the signal peptide cleavage has not been experimentally proven.

The protein localises to the periplasm. It carries out the reaction 2 Fe(II)-[cytochrome] + nitrate + 2 H(+) = 2 Fe(III)-[cytochrome] + nitrite + H2O. In terms of biological role, catalytic subunit of the periplasmic nitrate reductase complex NapAB. Receives electrons from NapB and catalyzes the reduction of nitrate to nitrite. The polypeptide is Periplasmic nitrate reductase (Nautilia profundicola (strain ATCC BAA-1463 / DSM 18972 / AmH)).